Here is a 274-residue protein sequence, read N- to C-terminus: Dermonecrotic toxin LarSicTox-alphaIV1 (274 aa).

The active site involves His-5. Mg(2+)-binding residues include Glu-25 and Asp-27. His-41 serves as the catalytic Nucleophile. 2 disulfides stabilise this stretch: Cys-45–Cys-51 and Cys-47–Cys-192. Residue Asp-85 participates in Mg(2+) binding.

It belongs to the arthropod phospholipase D family. Class II subfamily. Mg(2+) serves as cofactor. Expressed by the venom gland.

Its subcellular location is the secreted. The enzyme catalyses an N-(acyl)-sphingosylphosphocholine = an N-(acyl)-sphingosyl-1,3-cyclic phosphate + choline. It carries out the reaction an N-(acyl)-sphingosylphosphoethanolamine = an N-(acyl)-sphingosyl-1,3-cyclic phosphate + ethanolamine. It catalyses the reaction a 1-acyl-sn-glycero-3-phosphocholine = a 1-acyl-sn-glycero-2,3-cyclic phosphate + choline. The catalysed reaction is a 1-acyl-sn-glycero-3-phosphoethanolamine = a 1-acyl-sn-glycero-2,3-cyclic phosphate + ethanolamine. In terms of biological role, dermonecrotic toxins cleave the phosphodiester linkage between the phosphate and headgroup of certain phospholipids (sphingolipid and lysolipid substrates), forming an alcohol (often choline) and a cyclic phosphate. This toxin acts on sphingomyelin (SM). It may also act on ceramide phosphoethanolamine (CPE), lysophosphatidylcholine (LPC) and lysophosphatidylethanolamine (LPE), but not on lysophosphatidylserine (LPS), and lysophosphatidylglycerol (LPG). It acts by transphosphatidylation, releasing exclusively cyclic phosphate products as second products. Induces dermonecrosis, hemolysis, increased vascular permeability, edema, inflammatory response, and platelet aggregation. The chain is Dermonecrotic toxin LarSicTox-alphaIV1 from Loxosceles arizonica (Arizona brown spider).